We begin with the raw amino-acid sequence, 242 residues long: Ditrans,polycis-undecaprenyl-diphosphate synthase ((2E,6E)-farnesyl-diphosphate specific) (242 aa).

Residue aspartate 21 is part of the active site. Aspartate 21 serves as a coordination point for Mg(2+). Substrate is bound by residues 22–25, tryptophan 26, arginine 34, histidine 38, and 66–68; these read GNGR and SSE. The active-site Proton acceptor is the asparagine 69. Residues tryptophan 70, arginine 72, arginine 189, and 195–197 contribute to the substrate site; that span reads RIS. Glutamate 208 serves as a coordination point for Mg(2+).

The protein belongs to the UPP synthase family. As to quaternary structure, homodimer. The cofactor is Mg(2+).

The enzyme catalyses 8 isopentenyl diphosphate + (2E,6E)-farnesyl diphosphate = di-trans,octa-cis-undecaprenyl diphosphate + 8 diphosphate. In terms of biological role, catalyzes the sequential condensation of isopentenyl diphosphate (IPP) with (2E,6E)-farnesyl diphosphate (E,E-FPP) to yield (2Z,6Z,10Z,14Z,18Z,22Z,26Z,30Z,34E,38E)-undecaprenyl diphosphate (di-trans,octa-cis-UPP). UPP is the precursor of glycosyl carrier lipid in the biosynthesis of bacterial cell wall polysaccharide components such as peptidoglycan and lipopolysaccharide. The chain is Ditrans,polycis-undecaprenyl-diphosphate synthase ((2E,6E)-farnesyl-diphosphate specific) from Haemophilus ducreyi (strain 35000HP / ATCC 700724).